Consider the following 196-residue polypeptide: Peptidyl-tRNA hydrolase (196 aa).

Tyrosine 19 contributes to the tRNA binding site. The Proton acceptor role is filled by histidine 24. 3 residues coordinate tRNA: tyrosine 68, asparagine 70, and asparagine 116.

It belongs to the PTH family. As to quaternary structure, monomer.

It is found in the cytoplasm. The enzyme catalyses an N-acyl-L-alpha-aminoacyl-tRNA + H2O = an N-acyl-L-amino acid + a tRNA + H(+). Hydrolyzes ribosome-free peptidyl-tRNAs (with 1 or more amino acids incorporated), which drop off the ribosome during protein synthesis, or as a result of ribosome stalling. Functionally, catalyzes the release of premature peptidyl moieties from peptidyl-tRNA molecules trapped in stalled 50S ribosomal subunits, and thus maintains levels of free tRNAs and 50S ribosomes. The polypeptide is Peptidyl-tRNA hydrolase (Aromatoleum aromaticum (strain DSM 19018 / LMG 30748 / EbN1) (Azoarcus sp. (strain EbN1))).